Consider the following 302-residue polypeptide: Sulfate adenylyltransferase subunit 2 (302 aa).

The segment at 280 to 302 (RQGRLIDSDQSASMEQKKRQGYF) is disordered.

It belongs to the PAPS reductase family. CysD subfamily. Heterodimer composed of CysD, the smaller subunit, and CysN.

The enzyme catalyses sulfate + ATP + H(+) = adenosine 5'-phosphosulfate + diphosphate. It participates in sulfur metabolism; hydrogen sulfide biosynthesis; sulfite from sulfate: step 1/3. Its function is as follows. With CysN forms the ATP sulfurylase (ATPS) that catalyzes the adenylation of sulfate producing adenosine 5'-phosphosulfate (APS) and diphosphate, the first enzymatic step in sulfur assimilation pathway. APS synthesis involves the formation of a high-energy phosphoric-sulfuric acid anhydride bond driven by GTP hydrolysis by CysN coupled to ATP hydrolysis by CysD. The sequence is that of Sulfate adenylyltransferase subunit 2 from Shewanella putrefaciens (strain CN-32 / ATCC BAA-453).